The chain runs to 78 residues: MSRVCQVTGKRPVSGNNRSHAMNATKRRFLPNLHSHRFWVEAEKRFVTLRVSAKGMRVIDKKGIETVLADLRTRGEKY.

A disordered region spans residues 1 to 21; the sequence is MSRVCQVTGKRPVSGNNRSHA.

This sequence belongs to the bacterial ribosomal protein bL28 family.

This Serratia proteamaculans (strain 568) protein is Large ribosomal subunit protein bL28.